The sequence spans 175 residues: Ribosome maturation factor RimM (175 aa).

The PRC barrel domain maps to 100–174 (EDEYYWNDVI…VKHKIITVIW (75 aa)).

Belongs to the RimM family. Binds ribosomal protein uS19.

The protein resides in the cytoplasm. An accessory protein needed during the final step in the assembly of 30S ribosomal subunit, possibly for assembly of the head region. Essential for efficient processing of 16S rRNA. May be needed both before and after RbfA during the maturation of 16S rRNA. It has affinity for free ribosomal 30S subunits but not for 70S ribosomes. The protein is Ribosome maturation factor RimM of Buchnera aphidicola subsp. Schizaphis graminum (strain Sg).